The sequence spans 153 residues: Bkd operon transcriptional regulator (153 aa).

The HTH asnC-type domain maps to 4-65 (LDRIDLKILR…RLDEERLSGA (62 aa)). The segment at residues 23–42 (WRDLAQKVGLSLTPTLRRVR) is a DNA-binding region (H-T-H motif).

In terms of biological role, positive regulator of the bkd operon for branched-chain keto acid dehydrogenase complex. The protein is Bkd operon transcriptional regulator (bkdR) of Pseudomonas aeruginosa (strain ATCC 15692 / DSM 22644 / CIP 104116 / JCM 14847 / LMG 12228 / 1C / PRS 101 / PAO1).